We begin with the raw amino-acid sequence, 616 residues long: UvrABC system protein C (616 aa).

Residues 12 to 91 (ESPGVYLWKD…IKEYHPRFNI (80 aa)) form the GIY-YIG domain. The region spanning 202–237 (SDVMHHVRERMLDASERLDFERAAELRDALAHLEKM) is the UVR domain.

The protein belongs to the UvrC family. In terms of assembly, interacts with UvrB in an incision complex.

It localises to the cytoplasm. In terms of biological role, the UvrABC repair system catalyzes the recognition and processing of DNA lesions. UvrC both incises the 5' and 3' sides of the lesion. The N-terminal half is responsible for the 3' incision and the C-terminal half is responsible for the 5' incision. This chain is UvrABC system protein C, found in Gemmatimonas aurantiaca (strain DSM 14586 / JCM 11422 / NBRC 100505 / T-27).